The chain runs to 85 residues: uncharacterized protein (85 aa).

This sequence belongs to the ycf76 family.

The protein localises to the plastid. It localises to the chloroplast. This is an uncharacterized protein from Saccharum hybrid (Sugarcane).